The following is a 361-amino-acid chain: 3-dehydroquinate synthase (361 aa).

NAD(+) contacts are provided by residues 69 to 74 (DGEEYK), 103 to 107 (GVIGD), 127 to 128 (TT), Lys-140, Lys-149, and 167 to 170 (TLDT). Residues Glu-182, His-245, and His-262 each contribute to the Zn(2+) site.

This sequence belongs to the sugar phosphate cyclases superfamily. Dehydroquinate synthase family. It depends on Co(2+) as a cofactor. Zn(2+) is required as a cofactor. The cofactor is NAD(+).

It is found in the cytoplasm. It carries out the reaction 7-phospho-2-dehydro-3-deoxy-D-arabino-heptonate = 3-dehydroquinate + phosphate. It participates in metabolic intermediate biosynthesis; chorismate biosynthesis; chorismate from D-erythrose 4-phosphate and phosphoenolpyruvate: step 2/7. In terms of biological role, catalyzes the conversion of 3-deoxy-D-arabino-heptulosonate 7-phosphate (DAHP) to dehydroquinate (DHQ). In Thioalkalivibrio sulfidiphilus (strain HL-EbGR7), this protein is 3-dehydroquinate synthase.